The sequence spans 292 residues: Acetylglutamate kinase (292 aa).

Substrate-binding positions include 64-65 (GG), Arg86, and Asn190.

This sequence belongs to the acetylglutamate kinase family. ArgB subfamily.

The protein resides in the cytoplasm. The enzyme catalyses N-acetyl-L-glutamate + ATP = N-acetyl-L-glutamyl 5-phosphate + ADP. The protein operates within amino-acid biosynthesis; L-arginine biosynthesis; N(2)-acetyl-L-ornithine from L-glutamate: step 2/4. Catalyzes the ATP-dependent phosphorylation of N-acetyl-L-glutamate. The chain is Acetylglutamate kinase from Leptospira biflexa serovar Patoc (strain Patoc 1 / Ames).